The chain runs to 196 residues: Putative NADH dehydrogenase/NAD(P)H nitroreductase Reut_A1586 (196 aa).

Belongs to the nitroreductase family. HadB/RutE subfamily. FMN is required as a cofactor.

In Cupriavidus pinatubonensis (strain JMP 134 / LMG 1197) (Cupriavidus necator (strain JMP 134)), this protein is Putative NADH dehydrogenase/NAD(P)H nitroreductase Reut_A1586.